Consider the following 598-residue polypeptide: MIQHIRNFSIIAHIDHGKSTLADRIIQFCGGLSDREMEAQVLDSMDLERERGITIKAQTAALYYQAKDGVNYLLNLIDTPGHVDFSYEVSRSLSACEGALLVVDASQGVEAQTVANCYTAIEQGVEVIPVLNKIDLPAADPDRVIAEIEDIIGIEARSALHISAKTGEGISEVLEMIVARIPPPEGEIDAPLRALIIDSWFDSYVGVVMLVRVMDGILKPGSKLLLMSNKANYLCEEVGVFQPKAVNRESLSAGEVGFIISGIKDLKSAKVGDTVTLVDHPASEPLDGFKEIKPQVFAGLYPVESNQYDALRAALEKLRLNDASLHFEPETSQALGFGFRCGFLGLLHLDIVQERLEREYDMDLITTAPTVVYQVVLHDGKIVEIENPSRLPELSSIEEIREPVITATILVPEEYVGAVITLCTGKRGVQENMQYMGRQVMLVYELPLNEVVMDFFDKLKSVSRGYASLDYEFKEFRVADLVKLDILINNERVDALSLIVHRASSQQRGRELAQKMRELIPRQMFDIAVQAAIGAHIVARENVKALRKNVLAKCYGGDITRKRKLLEKQKAGKKRMKRVGNVEIPQAAFLAILQVDGK.

The tr-type G domain occupies 3–185 (QHIRNFSIIA…MIVARIPPPE (183 aa)). GTP contacts are provided by residues 15–20 (DHGKST) and 132–135 (NKID).

It belongs to the TRAFAC class translation factor GTPase superfamily. Classic translation factor GTPase family. LepA subfamily.

Its subcellular location is the cell inner membrane. The enzyme catalyses GTP + H2O = GDP + phosphate + H(+). Functionally, required for accurate and efficient protein synthesis under certain stress conditions. May act as a fidelity factor of the translation reaction, by catalyzing a one-codon backward translocation of tRNAs on improperly translocated ribosomes. Back-translocation proceeds from a post-translocation (POST) complex to a pre-translocation (PRE) complex, thus giving elongation factor G a second chance to translocate the tRNAs correctly. Binds to ribosomes in a GTP-dependent manner. The chain is Elongation factor 4 from Nitrosomonas eutropha (strain DSM 101675 / C91 / Nm57).